Consider the following 359-residue polypeptide: GTP 3',8-cyclase 1 (359 aa).

One can recognise a Radical SAM core domain in the interval 21–241 (RCRRMMGDLR…SLEKRYGRIE (221 aa)). Position 30 (Arg30) interacts with GTP. The [4Fe-4S] cluster site is built by Cys37 and Cys41. S-adenosyl-L-methionine is bound at residue Tyr43. Cys44 is a binding site for [4Fe-4S] cluster. Arg80 contacts GTP. Gly84 contacts S-adenosyl-L-methionine. Thr115 contributes to the GTP binding site. Ser139 contributes to the S-adenosyl-L-methionine binding site. GTP is bound at residue Lys176. An S-adenosyl-L-methionine-binding site is contributed by Met210. [4Fe-4S] cluster is bound by residues Cys273 and Cys276. Position 278-280 (278-280 (RSR)) interacts with GTP. [4Fe-4S] cluster is bound at residue Cys290.

The protein belongs to the radical SAM superfamily. MoaA family. In terms of assembly, monomer and homodimer. Requires [4Fe-4S] cluster as cofactor.

It carries out the reaction GTP + AH2 + S-adenosyl-L-methionine = (8S)-3',8-cyclo-7,8-dihydroguanosine 5'-triphosphate + 5'-deoxyadenosine + L-methionine + A + H(+). It functions in the pathway cofactor biosynthesis; molybdopterin biosynthesis. Its function is as follows. Catalyzes the cyclization of GTP to (8S)-3',8-cyclo-7,8-dihydroguanosine 5'-triphosphate. In Mycobacterium tuberculosis (strain CDC 1551 / Oshkosh), this protein is GTP 3',8-cyclase 1.